The following is a 251-amino-acid chain: Probable transcriptional regulatory protein Swol_1435 (251 aa).

Residues 1-23 form a disordered region; the sequence is MAGHSKWANIKHKKARSDEKRGK.

This sequence belongs to the TACO1 family.

It localises to the cytoplasm. The chain is Probable transcriptional regulatory protein Swol_1435 from Syntrophomonas wolfei subsp. wolfei (strain DSM 2245B / Goettingen).